A 437-amino-acid chain; its full sequence is Glycogen synthase (437 aa).

K15 contacts ADP-alpha-D-glucose.

It belongs to the glycosyltransferase 1 family. Bacterial/plant glycogen synthase subfamily.

It carries out the reaction [(1-&gt;4)-alpha-D-glucosyl](n) + ADP-alpha-D-glucose = [(1-&gt;4)-alpha-D-glucosyl](n+1) + ADP + H(+). It functions in the pathway glycan biosynthesis; glycogen biosynthesis. Synthesizes alpha-1,4-glucan chains using ADP-glucose. The sequence is that of Glycogen synthase from Thermus thermophilus (strain ATCC 27634 / DSM 579 / HB8).